The sequence spans 205 residues: Casparian strip membrane protein 4 (205 aa).

At 1–58 the chain is on the cytoplasmic side; sequence MDIEKTGSRREEEEPIVQKPKLEKGKGKAHVFAPPMNYSRIMEKHKQEKVSMAGWKRG. Residues 59-79 traverse the membrane as a helical segment; it reads VAIFDFVLRLIAAITAMAAAA. The Extracellular portion of the chain corresponds to 80–109; it reads KMATTEETLPFFTQFLQFSADYTDLPTLSS. Residues 110-130 form a helical membrane-spanning segment; the sequence is FVIVNSIVGGYLTLSLPFSIV. The Cytoplasmic segment spans residues 131 to 148; that stretch reads CILRPLAVPPRLFLILCD. Residues 149–169 traverse the membrane as a helical segment; that stretch reads TAMMGLTMVAASASAAIVYLA. Topologically, residues 170–205 are extracellular; it reads HNGNSSSNWLPVCQQFGDFCKERVAPWWLPLLQRLF. An N-linked (GlcNAc...) asparagine glycan is attached at asparagine 173.

The protein belongs to the Casparian strip membrane proteins (CASP) family. Homodimer and heterodimers.

Its subcellular location is the cell membrane. In terms of biological role, regulates membrane-cell wall junctions and localized cell wall deposition. Required for establishment of the Casparian strip membrane domain (CSD) and the subsequent formation of Casparian strips, a cell wall modification of the root endodermis that determines an apoplastic barrier between the intraorganismal apoplasm and the extraorganismal apoplasm and prevents lateral diffusion. The chain is Casparian strip membrane protein 4 from Raphanus sativus (Radish).